We begin with the raw amino-acid sequence, 474 residues long: ATP synthase subunit beta (474 aa).

153–160 serves as a coordination point for ATP; sequence GGAGVGKT.

The protein belongs to the ATPase alpha/beta chains family. F-type ATPases have 2 components, CF(1) - the catalytic core - and CF(0) - the membrane proton channel. CF(1) has five subunits: alpha(3), beta(3), gamma(1), delta(1), epsilon(1). CF(0) has three main subunits: a(1), b(2) and c(9-12). The alpha and beta chains form an alternating ring which encloses part of the gamma chain. CF(1) is attached to CF(0) by a central stalk formed by the gamma and epsilon chains, while a peripheral stalk is formed by the delta and b chains.

It localises to the cell inner membrane. The catalysed reaction is ATP + H2O + 4 H(+)(in) = ADP + phosphate + 5 H(+)(out). Its function is as follows. Produces ATP from ADP in the presence of a proton gradient across the membrane. The catalytic sites are hosted primarily by the beta subunits. The sequence is that of ATP synthase subunit beta from Neorickettsia sennetsu (strain ATCC VR-367 / Miyayama) (Ehrlichia sennetsu).